A 300-amino-acid chain; its full sequence is Ribosomal RNA small subunit methyltransferase H (300 aa).

S-adenosyl-L-methionine contacts are provided by residues alanine 33 to histidine 35, aspartate 52, phenylalanine 86, aspartate 97, and glutamine 104.

The protein belongs to the methyltransferase superfamily. RsmH family.

It is found in the cytoplasm. It catalyses the reaction cytidine(1402) in 16S rRNA + S-adenosyl-L-methionine = N(4)-methylcytidine(1402) in 16S rRNA + S-adenosyl-L-homocysteine + H(+). Its function is as follows. Specifically methylates the N4 position of cytidine in position 1402 (C1402) of 16S rRNA. This chain is Ribosomal RNA small subunit methyltransferase H, found in Aliarcobacter butzleri (strain RM4018) (Arcobacter butzleri).